The primary structure comprises 268 residues: Ribosomal RNA large subunit methyltransferase E (268 aa).

The segment at 1–60 is disordered; that stretch reads MKPPRSRSGSSKDTGPKRIPGKALKSASNPGENDATLDSATARTARNKTVSLRTARGRTT. Positions 26 to 52 are enriched in polar residues; that stretch reads SASNPGENDATLDSATARTARNKTVSL. Residues G115, W117, D133, D149, and D173 each coordinate S-adenosyl-L-methionine. The Proton acceptor role is filled by K213.

The protein belongs to the class I-like SAM-binding methyltransferase superfamily. RNA methyltransferase RlmE family.

Its subcellular location is the cytoplasm. It catalyses the reaction uridine(2552) in 23S rRNA + S-adenosyl-L-methionine = 2'-O-methyluridine(2552) in 23S rRNA + S-adenosyl-L-homocysteine + H(+). Its function is as follows. Specifically methylates the uridine in position 2552 of 23S rRNA at the 2'-O position of the ribose in the fully assembled 50S ribosomal subunit. This chain is Ribosomal RNA large subunit methyltransferase E, found in Gluconobacter oxydans (strain 621H) (Gluconobacter suboxydans).